The primary structure comprises 273 residues: MPELPEVETLKNSLKDKLIGLIIENVELKRDNLRYKLSPLLATETLNTNILDVRRRAKYLIIDFNNDYSLIVHLGMSGRFTLQSANYKTQKHDHVIFDLSNGEKLIFNDTRRFGMIYSFKTDLLEKEFLNDLGIEPFSDLLTLEYLKDKLQTKKIPIKNLIMDNRVIVGVGNIYASESLHLARIHPDKSGNNLRDDEIENLIKAIRDVLTKAITAGGTTLKDFVNGDNKPGYFTKQLKVYGREGQSCLSCSSTIIKIKHSGRSTFYCKTCQYS.

The Schiff-base intermediate with DNA role is filled by proline 2. Glutamate 3 functions as the Proton donor in the catalytic mechanism. Lysine 58 acts as the Proton donor; for beta-elimination activity in catalysis. Histidine 92, arginine 111, and lysine 153 together coordinate DNA. Residues 238–272 form an FPG-type zinc finger; it reads KVYGREGQSCLSCSSTIIKIKHSGRSTFYCKTCQY. Arginine 262 (proton donor; for delta-elimination activity) is an active-site residue.

This sequence belongs to the FPG family. As to quaternary structure, monomer. Requires Zn(2+) as cofactor.

The enzyme catalyses Hydrolysis of DNA containing ring-opened 7-methylguanine residues, releasing 2,6-diamino-4-hydroxy-5-(N-methyl)formamidopyrimidine.. It carries out the reaction 2'-deoxyribonucleotide-(2'-deoxyribose 5'-phosphate)-2'-deoxyribonucleotide-DNA = a 3'-end 2'-deoxyribonucleotide-(2,3-dehydro-2,3-deoxyribose 5'-phosphate)-DNA + a 5'-end 5'-phospho-2'-deoxyribonucleoside-DNA + H(+). In terms of biological role, involved in base excision repair of DNA damaged by oxidation or by mutagenic agents. Acts as a DNA glycosylase that recognizes and removes damaged bases. Has a preference for oxidized purines, such as 7,8-dihydro-8-oxoguanine (8-oxoG). Has AP (apurinic/apyrimidinic) lyase activity and introduces nicks in the DNA strand. Cleaves the DNA backbone by beta-delta elimination to generate a single-strand break at the site of the removed base with both 3'- and 5'-phosphates. The sequence is that of Formamidopyrimidine-DNA glycosylase from Rickettsia conorii (strain ATCC VR-613 / Malish 7).